The sequence spans 354 residues: Uroporphyrinogen decarboxylase (354 aa).

Substrate-binding positions include 27–31 (RQAGR), Asp77, Tyr154, Ser209, and His327.

It belongs to the uroporphyrinogen decarboxylase family. Homodimer.

It is found in the cytoplasm. The catalysed reaction is uroporphyrinogen III + 4 H(+) = coproporphyrinogen III + 4 CO2. It participates in porphyrin-containing compound metabolism; protoporphyrin-IX biosynthesis; coproporphyrinogen-III from 5-aminolevulinate: step 4/4. Catalyzes the decarboxylation of four acetate groups of uroporphyrinogen-III to yield coproporphyrinogen-III. The protein is Uroporphyrinogen decarboxylase of Pseudomonas savastanoi pv. phaseolicola (strain 1448A / Race 6) (Pseudomonas syringae pv. phaseolicola (strain 1448A / Race 6)).